The sequence spans 700 residues: Polyribonucleotide nucleotidyltransferase (700 aa).

Mg(2+)-binding residues include aspartate 486 and aspartate 492. A KH domain is found at 554 to 613; it reads PKIISTTINPDKIREVIGPGGKMINKIIDETGVKIDINDDGRVYIFSSDIQAGKRARSMI. An S1 motif domain is found at 623 to 691; it reads GQVFLGRVIR…KQGRVNLSRK (69 aa).

The protein belongs to the polyribonucleotide nucleotidyltransferase family. Requires Mg(2+) as cofactor.

It is found in the cytoplasm. It catalyses the reaction RNA(n+1) + phosphate = RNA(n) + a ribonucleoside 5'-diphosphate. Its function is as follows. Involved in mRNA degradation. Catalyzes the phosphorolysis of single-stranded polyribonucleotides processively in the 3'- to 5'-direction. The polypeptide is Polyribonucleotide nucleotidyltransferase (Acetivibrio thermocellus (strain ATCC 27405 / DSM 1237 / JCM 9322 / NBRC 103400 / NCIMB 10682 / NRRL B-4536 / VPI 7372) (Clostridium thermocellum)).